Reading from the N-terminus, the 232-residue chain is 2,3-bisphosphoglycerate-dependent phosphoglycerate mutase (232 aa).

Substrate is bound by residues 10 to 17 (RHGESQWN), 23 to 24 (TG), Arg-62, 89 to 92 (ERHY), Lys-100, 116 to 117 (RR), and 186 to 187 (GN). The Tele-phosphohistidine intermediate role is filled by His-11. Glu-89 functions as the Proton donor/acceptor in the catalytic mechanism.

It belongs to the phosphoglycerate mutase family. BPG-dependent PGAM subfamily. Homodimer.

The enzyme catalyses (2R)-2-phosphoglycerate = (2R)-3-phosphoglycerate. Its pathway is carbohydrate degradation; glycolysis; pyruvate from D-glyceraldehyde 3-phosphate: step 3/5. Its function is as follows. Catalyzes the interconversion of 2-phosphoglycerate and 3-phosphoglycerate. In Blochmanniella pennsylvanica (strain BPEN), this protein is 2,3-bisphosphoglycerate-dependent phosphoglycerate mutase.